The primary structure comprises 124 residues: Large ribosomal subunit protein bL21 (124 aa).

The interval 105-124 is disordered; the sequence is NAPSIGPRVRKAKPAAEAAE.

It belongs to the bacterial ribosomal protein bL21 family. Part of the 50S ribosomal subunit. Contacts protein L20.

In terms of biological role, this protein binds to 23S rRNA in the presence of protein L20. The protein is Large ribosomal subunit protein bL21 of Rhodopseudomonas palustris (strain BisA53).